A 178-amino-acid chain; its full sequence is Large ribosomal subunit protein uL5 (178 aa).

This sequence belongs to the universal ribosomal protein uL5 family. Part of the 50S ribosomal subunit; part of the 5S rRNA/L5/L18/L25 subcomplex. Contacts the 5S rRNA and the P site tRNA. Forms a bridge to the 30S subunit in the 70S ribosome.

Functionally, this is one of the proteins that bind and probably mediate the attachment of the 5S RNA into the large ribosomal subunit, where it forms part of the central protuberance. In the 70S ribosome it contacts protein S13 of the 30S subunit (bridge B1b), connecting the 2 subunits; this bridge is implicated in subunit movement. Contacts the P site tRNA; the 5S rRNA and some of its associated proteins might help stabilize positioning of ribosome-bound tRNAs. In Syntrophomonas wolfei subsp. wolfei (strain DSM 2245B / Goettingen), this protein is Large ribosomal subunit protein uL5.